Consider the following 218-residue polypeptide: Cytochrome b6 (218 aa).

The chain crosses the membrane as a helical span at residues 35–55 (IFYCLGGITLVCFLIQFATGF). Cys38 is a heme c binding site. Heme b-binding residues include His89 and His103. 3 consecutive transmembrane segments (helical) span residues 93–113 (ASMM…TGGF), 119–139 (LTWV…VTGY), and 189–209 (LHTF…FLMI). Residues His190 and His205 each coordinate heme b.

This sequence belongs to the cytochrome b family. PetB subfamily. As to quaternary structure, the 4 large subunits of the cytochrome b6-f complex are cytochrome b6, subunit IV (17 kDa polypeptide, PetD), cytochrome f and the Rieske protein, while the 4 small subunits are PetG, PetL, PetM and PetN. The complex functions as a dimer. Requires heme b as cofactor. It depends on heme c as a cofactor.

It is found in the cellular thylakoid membrane. Component of the cytochrome b6-f complex, which mediates electron transfer between photosystem II (PSII) and photosystem I (PSI), cyclic electron flow around PSI, and state transitions. This Prochlorococcus marinus (strain MIT 9515) protein is Cytochrome b6.